The chain runs to 38 residues: Potassium channel toxin alpha-KTx 2.21 (38 aa).

3 cysteine pairs are disulfide-bonded: C7–C29, C13–C34, and C17–C36.

As to expression, expressed by the venom gland.

The protein localises to the secreted. Functionally, inhibits human voltage-gated potassium (Kv) channels Kv1.2/KCNA2 and Kv1.3/KCNA3. Does not block human Kv1.1/KCNA1 at 100nM concentration. This is Potassium channel toxin alpha-KTx 2.21 from Centruroides bonito (Scorpion).